We begin with the raw amino-acid sequence, 473 residues long: MKTLYSLRRFYHVETLFNGTLALAGRDQETTGFAWWAGNARLINLSGKLLGAHVAHAGLIVFWAGAMNLFEVAHFVPEKPMYEQGLILLPHLATLGWGVGPGGEVIDTFPYFVSGVLHLISSAVLGFGGIYHALLGPETLEESFPFFGYVWKDRNKMTTILGIHLILLGIGAFLLVFKALYFGGVYDTWAPGGGDVRKITNLTLSPSIIFGYLLKSPFGGEGWIVSVDDLEDIIGGHVWLGSICILGGIWHILTKPFAWARRALVWSGEAYLSYSLGALAVFGFIACCFVWFNNTAYPSEFYGPTGPEASQAQAFTFLVRDQRLGANVGSAQGPTGLGKYLMRSPTGEVIFGGETMRFWDLRAPWLEPLRGPNGLDLSRLKKDIQPWQERRSAEYMTHAPLGSLNSVGGVATEINAVNYVSPRSWLATSHFVLGFFFFVGHLWHAGRARAAAAGFEKGIDRDFEPVLSMTPLN.

The propeptide occupies 1–14 (MKTLYSLRRFYHVE). Threonine 15 is modified (N-acetylthreonine). Threonine 15 is subject to Phosphothreonine. A run of 5 helical transmembrane segments spans residues 69–93 (LFEV…PHLA), 134–155 (LLGP…KDRN), 178–200 (KALY…RKIT), 255–275 (KPFA…LSYS), and 291–312 (WFNN…ASQA). Glutamate 367 contacts [CaMn4O5] cluster. Residues 447–471 (RARAAAAGFEKGIDRDFEPVLSMTP) form a helical membrane-spanning segment.

The protein belongs to the PsbB/PsbC family. PsbC subfamily. In terms of assembly, PSII is composed of 1 copy each of membrane proteins PsbA, PsbB, PsbC, PsbD, PsbE, PsbF, PsbH, PsbI, PsbJ, PsbK, PsbL, PsbM, PsbT, PsbX, PsbY, PsbZ, Psb30/Ycf12, at least 3 peripheral proteins of the oxygen-evolving complex and a large number of cofactors. It forms dimeric complexes. It depends on Binds multiple chlorophylls and provides some of the ligands for the Ca-4Mn-5O cluster of the oxygen-evolving complex. It may also provide a ligand for a Cl- that is required for oxygen evolution. PSII binds additional chlorophylls, carotenoids and specific lipids. as a cofactor.

The protein localises to the plastid. It localises to the chloroplast thylakoid membrane. Its function is as follows. One of the components of the core complex of photosystem II (PSII). It binds chlorophyll and helps catalyze the primary light-induced photochemical processes of PSII. PSII is a light-driven water:plastoquinone oxidoreductase, using light energy to abstract electrons from H(2)O, generating O(2) and a proton gradient subsequently used for ATP formation. This Atropa belladonna (Belladonna) protein is Photosystem II CP43 reaction center protein.